A 538-amino-acid polypeptide reads, in one-letter code: uncharacterized protein (538 aa).

Residues 1 to 13 show a composition bias toward low complexity; the sequence is MYNNNSSTSSDSS. The disordered stretch occupies residues 1–43; sequence MYNNNSSTSSDSSNSEEKANAQHASSTDSTSEHTDPAVADEGF. The next 12 membrane-spanning stretches (helical) occupy residues 97 to 117, 134 to 154, 163 to 183, 194 to 214, 226 to 246, 254 to 274, 328 to 348, 367 to 387, 408 to 428, 434 to 454, 458 to 478, and 504 to 524; these read ILHV…SSVF, VALL…ILWA, KIPL…VAVA, FFSG…FADM, IFAC…GFLA, WTEY…LFMK, PIVF…YLLL, ALPY…IAYF, LPPM…LAWS, VHWI…LTIF, LIYL…ANTI, and GSLL…FFIF.

It belongs to the major facilitator superfamily. CAR1 family.

It is found in the endoplasmic reticulum. The protein resides in the membrane. This is an uncharacterized protein from Schizosaccharomyces pombe (strain 972 / ATCC 24843) (Fission yeast).